A 329-amino-acid chain; its full sequence is GMP reductase (329 aa).

Cysteine 178 (thioimidate intermediate) is an active-site residue. Residue 207-230 (IIADGGIRNNGDIAKSIRFGATMC) participates in NADP(+) binding.

It belongs to the IMPDH/GMPR family. GuaC type 2 subfamily.

The catalysed reaction is IMP + NH4(+) + NADP(+) = GMP + NADPH + 2 H(+). Functionally, catalyzes the irreversible NADPH-dependent deamination of GMP to IMP. It functions in the conversion of nucleobase, nucleoside and nucleotide derivatives of G to A nucleotides, and in maintaining the intracellular balance of A and G nucleotides. The protein is GMP reductase of Lacticaseibacillus casei (strain BL23) (Lactobacillus casei).